A 552-amino-acid chain; its full sequence is Chaperonin GroEL (552 aa).

ATP contacts are provided by residues 29–32, lysine 50, 86–90, glycine 417, and aspartate 499; these read TAGP and DGTTT.

The protein belongs to the chaperonin (HSP60) family. Forms a cylinder of 14 subunits composed of two heptameric rings stacked back-to-back. Interacts with the co-chaperonin GroES.

It is found in the cytoplasm. It catalyses the reaction ATP + H2O + a folded polypeptide = ADP + phosphate + an unfolded polypeptide.. Functionally, together with its co-chaperonin GroES, plays an essential role in assisting protein folding. The GroEL-GroES system forms a nano-cage that allows encapsulation of the non-native substrate proteins and provides a physical environment optimized to promote and accelerate protein folding. The polypeptide is Chaperonin GroEL (Ehrlichia canis (strain Jake)).